The sequence spans 597 residues: Elongation factor 4 (597 aa).

Residues 2–184 (DHIRNFSIIA…ALVAKVPPPK (183 aa)) form the tr-type G domain. Residues 14-19 (DHGKST) and 131-134 (NKID) each bind GTP.

This sequence belongs to the TRAFAC class translation factor GTPase superfamily. Classic translation factor GTPase family. LepA subfamily.

The protein resides in the cell inner membrane. The enzyme catalyses GTP + H2O = GDP + phosphate + H(+). Its function is as follows. Required for accurate and efficient protein synthesis under certain stress conditions. May act as a fidelity factor of the translation reaction, by catalyzing a one-codon backward translocation of tRNAs on improperly translocated ribosomes. Back-translocation proceeds from a post-translocation (POST) complex to a pre-translocation (PRE) complex, thus giving elongation factor G a second chance to translocate the tRNAs correctly. Binds to ribosomes in a GTP-dependent manner. In Paraburkholderia phytofirmans (strain DSM 17436 / LMG 22146 / PsJN) (Burkholderia phytofirmans), this protein is Elongation factor 4.